Here is a 314-residue protein sequence, read N- to C-terminus: tRNA dimethylallyltransferase (314 aa).

6–13 provides a ligand contact to ATP; sequence GPTAVGKT. 8–13 is a substrate binding site; sequence TAVGKT. The interval 31–34 is interaction with substrate tRNA; the sequence is DSRQ.

Belongs to the IPP transferase family. As to quaternary structure, monomer. Mg(2+) serves as cofactor.

The enzyme catalyses adenosine(37) in tRNA + dimethylallyl diphosphate = N(6)-dimethylallyladenosine(37) in tRNA + diphosphate. In terms of biological role, catalyzes the transfer of a dimethylallyl group onto the adenine at position 37 in tRNAs that read codons beginning with uridine, leading to the formation of N6-(dimethylallyl)adenosine (i(6)A). The protein is tRNA dimethylallyltransferase of Pseudothermotoga lettingae (strain ATCC BAA-301 / DSM 14385 / NBRC 107922 / TMO) (Thermotoga lettingae).